The chain runs to 921 residues: Isoleucine--tRNA ligase (921 aa).

Residues 57–67 carry the 'HIGH' region motif; sequence PYANGELHMGH. Glu552 contributes to the L-isoleucyl-5'-AMP binding site. The 'KMSKS' region signature appears at 593-597; that stretch reads KMSKS. Residue Lys596 coordinates ATP. Zn(2+) is bound by residues Cys888, Cys891, Cys908, and Cys911.

Belongs to the class-I aminoacyl-tRNA synthetase family. IleS type 1 subfamily. In terms of assembly, monomer. Requires Zn(2+) as cofactor.

The protein localises to the cytoplasm. It carries out the reaction tRNA(Ile) + L-isoleucine + ATP = L-isoleucyl-tRNA(Ile) + AMP + diphosphate. Functionally, catalyzes the attachment of isoleucine to tRNA(Ile). As IleRS can inadvertently accommodate and process structurally similar amino acids such as valine, to avoid such errors it has two additional distinct tRNA(Ile)-dependent editing activities. One activity is designated as 'pretransfer' editing and involves the hydrolysis of activated Val-AMP. The other activity is designated 'posttransfer' editing and involves deacylation of mischarged Val-tRNA(Ile). The polypeptide is Isoleucine--tRNA ligase (Listeria welshimeri serovar 6b (strain ATCC 35897 / DSM 20650 / CCUG 15529 / CIP 8149 / NCTC 11857 / SLCC 5334 / V8)).